The chain runs to 237 residues: Sugar fermentation stimulation protein homolog (237 aa).

It belongs to the SfsA family.

This is Sugar fermentation stimulation protein homolog from Colwellia psychrerythraea (strain 34H / ATCC BAA-681) (Vibrio psychroerythus).